The primary structure comprises 127 residues: MSELRFTEDHEWLRVEADGSVTVGITAYAQNALGDVVFVQLPELQQYEKGNEASTVESVKAASGVYMPLTGEVVEVNGQLEDSPELVNEDPMGEGWFFRFIPADAEAVTALLDQDAYDRLLKANDDA.

The region spanning 20 to 101 is the Lipoyl-binding domain; that stretch reads SVTVGITAYA…MGEGWFFRFI (82 aa). Position 60 is an N6-lipoyllysine (Lys-60).

Belongs to the GcvH family. As to quaternary structure, the glycine cleavage system is composed of four proteins: P, T, L and H. Requires (R)-lipoate as cofactor.

In terms of biological role, the glycine cleavage system catalyzes the degradation of glycine. The H protein shuttles the methylamine group of glycine from the P protein to the T protein. The polypeptide is Glycine cleavage system H protein 1 (Pseudomonas putida (strain ATCC 47054 / DSM 6125 / CFBP 8728 / NCIMB 11950 / KT2440)).